The following is a 526-amino-acid chain: Outer capsid protein VP5 (526 aa).

The involved in membrane permeabilization stretch occupies residues 1 to 42 (MGKVIRSLSRFGKKVGNALTSNTAKKIYSTIGKAAERFAESE).

The protein belongs to the orbivirus VP5 family.

It is found in the virion. VP5 protein is one of the two proteins (with VP2) which constitute the virus particle outer capsid. Acts as a membrane permeabilization protein that mediates release of viral particles from endosomal compartments into the cytoplasm. Permeabilization activity is probably negatively regulated by VP2 and is triggered by endosomal degradation of VP2 and exposure to low pH. The protein is Outer capsid protein VP5 (Segment-6) of Bluetongue virus 1 (isolate Australia) (BTV 1).